The primary structure comprises 315 residues: Homoserine kinase (315 aa).

97-107 (PPARGLGSSAT) contacts ATP.

This sequence belongs to the GHMP kinase family. Homoserine kinase subfamily.

The protein localises to the cytoplasm. The catalysed reaction is L-homoserine + ATP = O-phospho-L-homoserine + ADP + H(+). It functions in the pathway amino-acid biosynthesis; L-threonine biosynthesis; L-threonine from L-aspartate: step 4/5. In terms of biological role, catalyzes the ATP-dependent phosphorylation of L-homoserine to L-homoserine phosphate. This Prochlorococcus marinus (strain SARG / CCMP1375 / SS120) protein is Homoserine kinase.